The following is a 185-amino-acid chain: Endoribonuclease YbeY (185 aa).

The Zn(2+) site is built by His-135, His-139, and His-145.

The protein belongs to the endoribonuclease YbeY family. Zn(2+) is required as a cofactor.

The protein resides in the cytoplasm. Functionally, single strand-specific metallo-endoribonuclease involved in late-stage 70S ribosome quality control and in maturation of the 3' terminus of the 16S rRNA. In Parasynechococcus marenigrum (strain WH8102), this protein is Endoribonuclease YbeY.